Reading from the N-terminus, the 520-residue chain is Ribonuclease Y (520 aa).

Residues 3–23 (FILVLCTVSSLFVGGGTGIFL) form a helical membrane-spanning segment. The 64-residue stretch at 209–272 (TVTAVTLPSE…QVAKMALERL (64 aa)) folds into the KH domain. The HD domain maps to 335-429 (VLRHSIEVAS…VQASDCLSGA (95 aa)).

It belongs to the RNase Y family.

Its subcellular location is the cell membrane. Functionally, endoribonuclease that initiates mRNA decay. The protein is Ribonuclease Y of Lawsonia intracellularis (strain PHE/MN1-00).